A 635-amino-acid chain; its full sequence is Threonine--tRNA ligase (635 aa).

The TGS domain maps to 1–61 (MTVVRLPDGT…ETDSDLVLIT (61 aa)). The interval 242–533 (DHRKLGKQLD…LIEHHAGALP (292 aa)) is catalytic. 3 residues coordinate Zn(2+): cysteine 333, histidine 384, and histidine 510.

This sequence belongs to the class-II aminoacyl-tRNA synthetase family. Homodimer. Requires Zn(2+) as cofactor.

The protein resides in the cytoplasm. The catalysed reaction is tRNA(Thr) + L-threonine + ATP = L-threonyl-tRNA(Thr) + AMP + diphosphate + H(+). Functionally, catalyzes the attachment of threonine to tRNA(Thr) in a two-step reaction: L-threonine is first activated by ATP to form Thr-AMP and then transferred to the acceptor end of tRNA(Thr). Also edits incorrectly charged L-seryl-tRNA(Thr). This chain is Threonine--tRNA ligase, found in Nitrosomonas europaea (strain ATCC 19718 / CIP 103999 / KCTC 2705 / NBRC 14298).